The following is a 306-amino-acid chain: Mating type protein SmtA-1 (306 aa).

A DNA-binding region (alpha box) is located at residues 49-104; sequence APKKKVNGFMGFRSYYSPLFSQFPQKARSPFMTILWQHDPFHNEWDFMCSVYSSIR.

This sequence belongs to the MATALPHA1 family.

Its subcellular location is the nucleus. Its function is as follows. Mating type proteins are sequence specific DNA-binding proteins that act as master switches in fungal differentiation by controlling gene expression in a cell type-specific fashion. Transcriptional activator that induces the transcription of alpha-specific genes. This Sordaria macrospora (strain ATCC MYA-333 / DSM 997 / K(L3346) / K-hell) protein is Mating type protein SmtA-1 (SMTA1).